We begin with the raw amino-acid sequence, 571 residues long: RNA polymerase sigma factor SigA (571 aa).

Positions 321-391 (MVESNLRLVI…TRAIADQART (71 aa)) are sigma-70 factor domain-2. Positions 345–348 (DLIQ) match the Interaction with polymerase core subunit RpoC motif. Residues 400–476 (ETINKVLRGA…DTAVESPAEA (77 aa)) are sigma-70 factor domain-3. A sigma-70 factor domain-4 region spans residues 489 to 542 (VLKTLTDRERFVLIHRFGLLDGRPKTLEEVGSAFNVTRERIRQIEAKALRKMRH). The H-T-H motif DNA-binding region spans 515–534 (LEEVGSAFNVTRERIRQIEA).

Belongs to the sigma-70 factor family. RpoD/SigA subfamily. Interacts transiently with the RNA polymerase catalytic core.

The protein resides in the cytoplasm. Sigma factors are initiation factors that promote the attachment of RNA polymerase to specific initiation sites and are then released. This sigma factor is the primary sigma factor during exponential growth. The chain is RNA polymerase sigma factor SigA from Chlamydia trachomatis serovar D (strain ATCC VR-885 / DSM 19411 / UW-3/Cx).